The following is a 141-amino-acid chain: uncharacterized protein (141 aa).

Basic and acidic residues predominate over residues 1–17 (MNKSESENDSEYHKEYS). Positions 1–24 (MNKSESENDSEYHKEYSESSDPED) are disordered. The stretch at 52 to 115 (IQNLNNNVKE…QMLFEKMRDM (64 aa)) forms a coiled coil.

This is an uncharacterized protein from Acanthamoeba polyphaga (Amoeba).